The following is an 895-amino-acid chain: Probable aminodeoxychorismate synthase, chloroplastic (895 aa).

The tract at residues 1–45 (MAALRLPTPPPPRAPAPWLHSSHRRRVAAPRGAGGGGGGGGAVPP) is disordered. A chloroplast-targeting transit peptide spans 1 to 48 (MAALRLPTPPPPRAPAPWLHSSHRRRVAAPRGAGGGGGGGGAVPPPPV). A compositionally biased stretch (gly residues) spans 32–42 (GAGGGGGGGGA). One can recognise a Glutamine amidotransferase type-1 domain in the interval 49–307 (RTLLIDNYDS…KKITTDFGLQ (259 aa)). Catalysis depends on Cys-135, which acts as the Nucleophile. Active-site residues include His-281 and Glu-283. Residues 387-875 (IFSVLFGHHS…KAKAPTKVVE (489 aa)) are PABB component.

It in the C-terminal section; belongs to the anthranilate synthase component I family.

It is found in the plastid. The protein resides in the chloroplast. It catalyses the reaction chorismate + L-glutamine = 4-amino-4-deoxychorismate + L-glutamate. It participates in cofactor biosynthesis; tetrahydrofolate biosynthesis; 4-aminobenzoate from chorismate: step 1/2. The protein operates within antibiotic biosynthesis; candicidin biosynthesis. In terms of biological role, bifunctional enzyme that catalyzes the biosynthesis of 4-amino-4-deoxychorismate (ADC) from chorismate and glutamine. In the first step, a glutamine amidotransferase generates ammonia that is channelled between the binding sites of glutamine and chorismate and used along with chorismate in the second step, catalyzed by aminodeoxychorismate synthase, to produce ADC. Required for the synthesis of 4-aminobenzoate (PABA), an important component in tetrahydrofolate biosynthesis. Does not possess ADC lyase activity. The protein is Probable aminodeoxychorismate synthase, chloroplastic (ADCS) of Oryza sativa subsp. japonica (Rice).